We begin with the raw amino-acid sequence, 185 residues long: ATP synthase subunit b, chloroplastic (185 aa).

The helical transmembrane segment at 7-29 (SFVYLVGHCPFAGSFAFNTDILA) threads the bilayer.

The protein belongs to the ATPase B chain family. In terms of assembly, F-type ATPases have 2 components, F(1) - the catalytic core - and F(0) - the membrane proton channel. F(1) has five subunits: alpha(3), beta(3), gamma(1), delta(1), epsilon(1). F(0) has four main subunits: a(1), b(1), b'(1) and c(10-14). The alpha and beta chains form an alternating ring which encloses part of the gamma chain. F(1) is attached to F(0) by a central stalk formed by the gamma and epsilon chains, while a peripheral stalk is formed by the delta, b and b' chains.

It is found in the plastid. The protein localises to the chloroplast thylakoid membrane. Functionally, f(1)F(0) ATP synthase produces ATP from ADP in the presence of a proton or sodium gradient. F-type ATPases consist of two structural domains, F(1) containing the extramembraneous catalytic core and F(0) containing the membrane proton channel, linked together by a central stalk and a peripheral stalk. During catalysis, ATP synthesis in the catalytic domain of F(1) is coupled via a rotary mechanism of the central stalk subunits to proton translocation. In terms of biological role, component of the F(0) channel, it forms part of the peripheral stalk, linking F(1) to F(0). The chain is ATP synthase subunit b, chloroplastic from Dioscorea elephantipes (Elephant's foot yam).